A 391-amino-acid chain; its full sequence is Arginine biosynthesis bifunctional protein ArgJ 2 (391 aa).

Residues Lys-167 and Ser-180 each coordinate substrate. Ser-180 (nucleophile) is an active-site residue.

It belongs to the ArgJ family. Heterotetramer of two alpha and two beta chains.

The protein resides in the cytoplasm. The enzyme catalyses N(2)-acetyl-L-ornithine + L-glutamate = N-acetyl-L-glutamate + L-ornithine. It catalyses the reaction L-glutamate + acetyl-CoA = N-acetyl-L-glutamate + CoA + H(+). It functions in the pathway amino-acid biosynthesis; L-arginine biosynthesis; L-ornithine and N-acetyl-L-glutamate from L-glutamate and N(2)-acetyl-L-ornithine (cyclic): step 1/1. Its pathway is amino-acid biosynthesis; L-arginine biosynthesis; N(2)-acetyl-L-ornithine from L-glutamate: step 1/4. Catalyzes two activities which are involved in the cyclic version of arginine biosynthesis: the synthesis of N-acetylglutamate from glutamate and acetyl-CoA as the acetyl donor, and of ornithine by transacetylation between N(2)-acetylornithine and glutamate. The protein is Arginine biosynthesis bifunctional protein ArgJ 2 of Streptomyces clavuligerus.